The following is a 250-amino-acid chain: Keratin-associated protein 9-1 (250 aa).

32 repeat units span residues 8–12, 13–17, 18–22, 37–41, 42–46, 51–55, 56–60, 61–65, 66–70, 75–79, 80–84, 85–89, 90–94, 95–99, 105–109, 114–117, 118–121, 133–137, 138–142, 143–147, 153–157, 162–166, 167–171, 176–180, 185–189, 190–194, 214–218, 219–223, 229–233, 234–238, 239–243, and 244–248. The 32 X 5 AA repeats of C-C-[CGSVRQH]-[SQTNP]-[PTSI] stretch occupies residues 8 to 248; sequence CCQPTCCRTT…CCVSSCCQPS (241 aa).

This sequence belongs to the KRTAP type 9 family. In terms of assembly, interacts with hair keratins.

Its function is as follows. In the hair cortex, hair keratin intermediate filaments are embedded in an interfilamentous matrix, consisting of hair keratin-associated proteins (KRTAP), which are essential for the formation of a rigid and resistant hair shaft through their extensive disulfide bond cross-linking with abundant cysteine residues of hair keratins. The matrix proteins include the high-sulfur and high-glycine-tyrosine keratins. The protein is Keratin-associated protein 9-1 of Homo sapiens (Human).